The chain runs to 208 residues: Thymidylate kinase (208 aa).

10-17 (GLEGAGKT) provides a ligand contact to ATP.

It belongs to the thymidylate kinase family.

It catalyses the reaction dTMP + ATP = dTDP + ADP. Phosphorylation of dTMP to form dTDP in both de novo and salvage pathways of dTTP synthesis. The polypeptide is Thymidylate kinase (Actinobacillus pleuropneumoniae serotype 5b (strain L20)).